The following is a 273-amino-acid chain: Formamidopyrimidine-DNA glycosylase (273 aa).

The active-site Schiff-base intermediate with DNA is the P2. The Proton donor role is filled by E3. K59 serves as the catalytic Proton donor; for beta-elimination activity. Residues H92 and R111 each coordinate DNA. The segment at 239-273 (KVYGKTDEPCVVCGTPIEKIKLNGRGTHFCPNCQK) adopts an FPG-type zinc-finger fold. The active-site Proton donor; for delta-elimination activity is the R263.

This sequence belongs to the FPG family. In terms of assembly, monomer. The cofactor is Zn(2+).

It catalyses the reaction Hydrolysis of DNA containing ring-opened 7-methylguanine residues, releasing 2,6-diamino-4-hydroxy-5-(N-methyl)formamidopyrimidine.. It carries out the reaction 2'-deoxyribonucleotide-(2'-deoxyribose 5'-phosphate)-2'-deoxyribonucleotide-DNA = a 3'-end 2'-deoxyribonucleotide-(2,3-dehydro-2,3-deoxyribose 5'-phosphate)-DNA + a 5'-end 5'-phospho-2'-deoxyribonucleoside-DNA + H(+). Functionally, involved in base excision repair of DNA damaged by oxidation or by mutagenic agents. Acts as a DNA glycosylase that recognizes and removes damaged bases. Has a preference for oxidized purines, such as 7,8-dihydro-8-oxoguanine (8-oxoG). Has AP (apurinic/apyrimidinic) lyase activity and introduces nicks in the DNA strand. Cleaves the DNA backbone by beta-delta elimination to generate a single-strand break at the site of the removed base with both 3'- and 5'-phosphates. In Listeria monocytogenes serovar 1/2a (strain ATCC BAA-679 / EGD-e), this protein is Formamidopyrimidine-DNA glycosylase.